A 331-amino-acid polypeptide reads, in one-letter code: UPF0324 membrane protein SACOL0411 (331 aa).

Transmembrane regions (helical) follow at residues 9-26 (FMIG…SFLA), 31-48 (ILDK…AILY), 69-88 (LLRF…DIIG), 93-115 (LLAI…NKLL), 122-144 (ALLL…APIF), 154-176 (SIGI…YAIF), 183-202 (YGAW…LAGG), 217-234 (LGRV…ILIM), 247-269 (ISIP…VTIP), 273-295 (LNIL…GLNV), and 308-330 (LMTI…HWLY).

It belongs to the UPF0324 family.

It is found in the cell membrane. This is UPF0324 membrane protein SACOL0411 from Staphylococcus aureus (strain COL).